We begin with the raw amino-acid sequence, 131 residues long: UPF0251 protein MMP0619 (131 aa).

The protein belongs to the UPF0251 family.

The polypeptide is UPF0251 protein MMP0619 (Methanococcus maripaludis (strain DSM 14266 / JCM 13030 / NBRC 101832 / S2 / LL)).